A 307-amino-acid polypeptide reads, in one-letter code: Recombination-associated protein RdgC (307 aa).

It belongs to the RdgC family.

The protein localises to the cytoplasm. Its subcellular location is the nucleoid. Functionally, may be involved in recombination. The protein is Recombination-associated protein RdgC of Colwellia psychrerythraea (strain 34H / ATCC BAA-681) (Vibrio psychroerythus).